A 399-amino-acid polypeptide reads, in one-letter code: Flavohemoprotein (399 aa).

The region spanning 1 to 138 (MLAEKTRSII…IADIFITVEK (138 aa)) is the Globin domain. Thr-22 carries the post-translational modification Phosphothreonine. His-85 is a heme b binding site. Residues Tyr-95 and Glu-137 each act as charge relay system in the active site. Positions 146 to 399 (WPGWKPFDIT…FGPKMSTVQV (254 aa)) are reductase. Residues 147–264 (PGWKPFDITA…SAPAGDFAIN (118 aa)) form the FAD-binding FR-type domain. Residues Tyr-189 and 207 to 210 (RHYS) contribute to the FAD site. 281 to 286 (GVGVTP) is a binding site for NADP(+). 389 to 392 (PFGP) contributes to the FAD binding site.

Belongs to the globin family. Two-domain flavohemoproteins subfamily. It in the C-terminal section; belongs to the flavoprotein pyridine nucleotide cytochrome reductase family. FAD serves as cofactor. The cofactor is heme b.

The protein localises to the cytoplasm. The enzyme catalyses 2 nitric oxide + NADPH + 2 O2 = 2 nitrate + NADP(+) + H(+). It carries out the reaction 2 nitric oxide + NADH + 2 O2 = 2 nitrate + NAD(+) + H(+). Functionally, is involved in NO detoxification in an aerobic process, termed nitric oxide dioxygenase (NOD) reaction that utilizes O(2) and NAD(P)H to convert NO to nitrate, which protects the fungus from various noxious nitrogen compounds. Therefore, plays a central role in the inducible response to nitrosative stress. In the presence of oxygen and NADH, it has NADH oxidase activity, which leads to the generation of superoxide and H(2)O(2). Under anaerobic conditions, it also exhibits nitric oxide reductase and FAD reductase activities. However, all these reactions are much lower than NOD activity. This is Flavohemoprotein (YHB1) from Saccharomyces cerevisiae (strain ATCC 204508 / S288c) (Baker's yeast).